We begin with the raw amino-acid sequence, 285 residues long: Tryptophan synthase alpha chain (285 aa).

Residues glutamate 53 and aspartate 64 each act as proton acceptor in the active site.

This sequence belongs to the TrpA family. Tetramer of two alpha and two beta chains.

The catalysed reaction is (1S,2R)-1-C-(indol-3-yl)glycerol 3-phosphate + L-serine = D-glyceraldehyde 3-phosphate + L-tryptophan + H2O. Its pathway is amino-acid biosynthesis; L-tryptophan biosynthesis; L-tryptophan from chorismate: step 5/5. Functionally, the alpha subunit is responsible for the aldol cleavage of indoleglycerol phosphate to indole and glyceraldehyde 3-phosphate. This Bordetella parapertussis (strain 12822 / ATCC BAA-587 / NCTC 13253) protein is Tryptophan synthase alpha chain.